Consider the following 198-residue polypeptide: Recombination protein RecR (198 aa).

The segment at 56–71 adopts a C4-type zinc-finger fold; sequence CDICGNVSEEPTCRIC. One can recognise a Toprim domain in the interval 79-175; the sequence is AVVCVVEEPK…NVTRLASGLP (97 aa).

It belongs to the RecR family.

Its function is as follows. May play a role in DNA repair. It seems to be involved in an RecBC-independent recombinational process of DNA repair. It may act with RecF and RecO. The protein is Recombination protein RecR of Saccharopolyspora erythraea (strain ATCC 11635 / DSM 40517 / JCM 4748 / NBRC 13426 / NCIMB 8594 / NRRL 2338).